The primary structure comprises 362 residues: N-acylethanolamine-hydrolyzing acid amidase (362 aa).

The signal sequence occupies residues 1-33 (MGTPAIRAACHGAHLALALLLLLSLSDPWLWAT). N-linked (GlcNAc...) asparagine glycans are attached at residues N42 and N112. C131 acts as the Nucleophile in catalysis. N-linked (GlcNAc...) asparagine glycans are attached at residues N314 and N338.

It belongs to the acid ceramidase family. In terms of assembly, heterodimer of an alpha and a beta subunit, produced by autocatalytic cleavage. In terms of processing, N-glycosylated. Tunicamycin treatment causes a reduction in specific activity against N-palmitoylethanolamine. Autoproteolytic cleavage at pH 4.5 gives rise to the alpha and beta subunit. Cleavage gives rise to a conformation change that activates the enzyme. The same catalytic Cys residue mediates the autoproteolytic cleavage and subsequent hydrolysis of lipid substrates. Expressed in brain, cecum, colon, heart, ileum, kidney, liver, lung, spleen, stomach, submaxillary gland, testis and thymus.

The protein resides in the lysosome. Its subcellular location is the membrane. The catalysed reaction is N-hexadecanoylethanolamine + H2O = ethanolamine + hexadecanoate. It catalyses the reaction an N-(long-chain fatty acyl)ethanolamine + H2O = a long-chain fatty acid + ethanolamine. The enzyme catalyses N-dodecanoylethanolamine + H2O = dodecanoate + ethanolamine. It carries out the reaction N-tetradecanoylethanolamine + H2O = tetradecanoate + ethanolamine. The catalysed reaction is an N-acylsphing-4-enine + H2O = sphing-4-enine + a fatty acid. It catalyses the reaction N-hexadecanoylsphing-4-enine + H2O = sphing-4-enine + hexadecanoate. The enzyme catalyses N-dodecanoylsphing-4-enine + H2O = dodecanoate + sphing-4-enine. It participates in lipid metabolism; fatty acid metabolism. Stimulated by DTT. Stimulated by nonionic detergent of the polyoxyethylenep-t-octylphenylether type (Triton X-100 or Nonidet P-40) whereas 3-[(3-cholamidopropyl)dimethylammonio]propane-1-sulfonate (CHAPS) and octyl alpha-D-glucopyranoside decrease the N-(long-chain-acyl)ethanolamine deacylase activity. Polysorbate 20 (Tween 20) is inhibitory. Stimulated by endogenous phospholipids such as choline- or ethanolamine-containing phospholipids, and dihydrolipoic acid. Functionally, degrades bioactive fatty acid amides to their corresponding acids, with the following preference: N-palmitoylethanolamine &gt; N-myristoylethanolamine &gt; N-stearoylethanolamine &gt; N-oleoylethanolamine &gt; N-linoleoylethanolamine &gt; N-arachidonoylethanolamine. The polypeptide is N-acylethanolamine-hydrolyzing acid amidase (Rattus norvegicus (Rat)).